We begin with the raw amino-acid sequence, 149 residues long: Nucleoside diphosphate kinase (149 aa).

ATP is bound by residues lysine 9, phenylalanine 57, arginine 85, threonine 91, arginine 102, and asparagine 112. Residue histidine 115 is the Pros-phosphohistidine intermediate of the active site.

It belongs to the NDK family. Requires Mg(2+) as cofactor.

Its subcellular location is the cytoplasm. It carries out the reaction a 2'-deoxyribonucleoside 5'-diphosphate + ATP = a 2'-deoxyribonucleoside 5'-triphosphate + ADP. The catalysed reaction is a ribonucleoside 5'-diphosphate + ATP = a ribonucleoside 5'-triphosphate + ADP. In terms of biological role, major role in the synthesis of nucleoside triphosphates other than ATP. The ATP gamma phosphate is transferred to the NDP beta phosphate via a ping-pong mechanism, using a phosphorylated active-site intermediate. The sequence is that of Nucleoside diphosphate kinase from Methanocorpusculum labreanum (strain ATCC 43576 / DSM 4855 / Z).